An 860-amino-acid polypeptide reads, in one-letter code: GPI ethanolamine phosphate transferase 2 (860 aa).

Asn123 and Asn180 each carry an N-linked (GlcNAc...) asparagine glycan. 8 consecutive transmembrane segments (helical) span residues 408 to 428 (LGGI…FSAL), 438 to 458 (LYLI…TVEE), 459 to 479 (EHQI…ISGS), 487 to 506 (FNWM…NQTG), 524 to 544 (NHPV…NKVW), 555 to 575 (LAFL…ITQA), 576 to 596 (WEAG…PGTL), and 639 to 659 (AFLT…LFMV). Asn672 is a glycosylation site (N-linked (GlcNAc...) asparagine). The next 4 helical transmembrane spans lie at 692–712 (LVLV…FSMG), 736–756 (FVGV…STAG), 795–815 (VYVV…TCFF), and 834–854 (FVWT…IFVV).

It belongs to the PIGG/PIGN/PIGO family. PIGG subfamily.

It is found in the endoplasmic reticulum membrane. Its pathway is glycolipid biosynthesis; glycosylphosphatidylinositol-anchor biosynthesis. Ethanolamine phosphate transferase involved in glycosylphosphatidylinositol-anchor biosynthesis. Transfers ethanolamine phosphate to the GPI second mannose. This is GPI ethanolamine phosphate transferase 2 (LAS21) from Yarrowia lipolytica (strain CLIB 122 / E 150) (Yeast).